Consider the following 557-residue polypeptide: Potassium-transporting ATPase potassium-binding subunit (557 aa).

The next 10 helical transmembrane spans lie at 1-21 (MEIL…IPIG), 62-82 (QYIF…YIIL), 132-152 (IVIT…ALAF), 176-196 (ILLP…VPQT), 253-273 (VQII…GHMI), 279-299 (AVAI…ICFS), 371-391 (IFGG…LTVF), 415-435 (LVAF…ALAL), 482-502 (VSAG…LLAV), and 528-548 (VTLI…AVAL).

This sequence belongs to the KdpA family. As to quaternary structure, the system is composed of three essential subunits: KdpA, KdpB and KdpC.

The protein localises to the cell membrane. Its function is as follows. Part of the high-affinity ATP-driven potassium transport (or Kdp) system, which catalyzes the hydrolysis of ATP coupled with the electrogenic transport of potassium into the cytoplasm. This subunit binds the extracellular potassium ions and delivers the ions to the membrane domain of KdpB through an intramembrane tunnel. The protein is Potassium-transporting ATPase potassium-binding subunit of Clostridium acetobutylicum (strain ATCC 824 / DSM 792 / JCM 1419 / IAM 19013 / LMG 5710 / NBRC 13948 / NRRL B-527 / VKM B-1787 / 2291 / W).